Reading from the N-terminus, the 376-residue chain is Chaperone protein DnaJ (376 aa).

A J domain is found at 5–70 (DYYEVLGVGR…DKKAAYDQFG (66 aa)). Residues 132–210 (GLTKELKVPT…CHGNGRVEKT (79 aa)) form a CR-type zinc finger. Zn(2+) contacts are provided by Cys-145, Cys-148, Cys-162, Cys-165, Cys-184, Cys-187, Cys-198, and Cys-201. CXXCXGXG motif repeat units lie at residues 145–152 (CDSCDGSG), 162–169 (CGTCHGMG), 184–191 (CPTCHGRG), and 198–205 (CSKCHGNG).

It belongs to the DnaJ family. In terms of assembly, homodimer. It depends on Zn(2+) as a cofactor.

It is found in the cytoplasm. Participates actively in the response to hyperosmotic and heat shock by preventing the aggregation of stress-denatured proteins and by disaggregating proteins, also in an autonomous, DnaK-independent fashion. Unfolded proteins bind initially to DnaJ; upon interaction with the DnaJ-bound protein, DnaK hydrolyzes its bound ATP, resulting in the formation of a stable complex. GrpE releases ADP from DnaK; ATP binding to DnaK triggers the release of the substrate protein, thus completing the reaction cycle. Several rounds of ATP-dependent interactions between DnaJ, DnaK and GrpE are required for fully efficient folding. Also involved, together with DnaK and GrpE, in the DNA replication of plasmids through activation of initiation proteins. The polypeptide is Chaperone protein DnaJ (Shewanella amazonensis (strain ATCC BAA-1098 / SB2B)).